The chain runs to 278 residues: tRNA(Phe) (4-demethylwyosine(37)-C(7)) aminocarboxypropyltransferase (278 aa).

S-adenosyl-L-methionine is bound by residues serine 109, arginine 116, glutamate 155, and 183–184 (DN).

It belongs to the class I-like SAM-binding methyltransferase superfamily. TRM5/TYW2 family.

It is found in the cytoplasm. It catalyses the reaction 4-demethylwyosine(37) in tRNA(Phe) + S-adenosyl-L-methionine = 4-demethyl-7-[(3S)-3-amino-3-carboxypropyl]wyosine(37) in tRNA(Phe) + S-methyl-5'-thioadenosine + H(+). Functionally, S-adenosyl-L-methionine-dependent transferase that acts as a component of the wyosine derivatives biosynthesis pathway. Catalyzes the transfer of the alpha-amino-alpha-carboxypropyl (acp) group from S-adenosyl-L-methionine to 4-demethylwyosine (imG-14), forming 7-aminocarboxypropyl-demethylwyosine (wybutosine-86) at position 37 of tRNA(Phe). The polypeptide is tRNA(Phe) (4-demethylwyosine(37)-C(7)) aminocarboxypropyltransferase (Pyrococcus horikoshii (strain ATCC 700860 / DSM 12428 / JCM 9974 / NBRC 100139 / OT-3)).